Consider the following 419-residue polypeptide: Maltoporin 2 (419 aa).

Positions methionine 1–alanine 23 are cleaved as a signal peptide.

Belongs to the porin LamB (TC 1.B.3) family. In terms of assembly, homotrimer formed of three 18-stranded antiparallel beta-barrels, containing three independent channels.

It localises to the cell outer membrane. The enzyme catalyses beta-maltose(in) = beta-maltose(out). In terms of biological role, involved in the transport of maltose and maltodextrins. In Yersinia pseudotuberculosis serotype O:1b (strain IP 31758), this protein is Maltoporin 2.